The chain runs to 383 residues: Protein RecA (383 aa).

79-86 (GPESSGKT) lines the ATP pocket. A disordered region spans residues 347–369 (IEEDNTEEKQSSKEKETDEKADK). Basic and acidic residues predominate over residues 353–369 (EEKQSSKEKETDEKADK).

Belongs to the RecA family.

It localises to the cytoplasm. In terms of biological role, can catalyze the hydrolysis of ATP in the presence of single-stranded DNA, the ATP-dependent uptake of single-stranded DNA by duplex DNA, and the ATP-dependent hybridization of homologous single-stranded DNAs. It interacts with LexA causing its activation and leading to its autocatalytic cleavage. This chain is Protein RecA, found in Streptococcus mutans serotype c (strain ATCC 700610 / UA159).